Here is a 117-residue protein sequence, read N- to C-terminus: UPF0251 protein DET0218 (117 aa).

This sequence belongs to the UPF0251 family.

This Dehalococcoides mccartyi (strain ATCC BAA-2266 / KCTC 15142 / 195) (Dehalococcoides ethenogenes (strain 195)) protein is UPF0251 protein DET0218.